A 256-amino-acid chain; its full sequence is Extracellular serine-rich protein ARB_03024 (256 aa).

An N-terminal signal peptide occupies residues 1-19 (MVATKSVLSAVALAGVAAA). Residues 135 to 235 (KIVPQSGSPT…TPTASPGAAA (101 aa)) are disordered. Positions 149–159 (GTLGGSGGSGG) are enriched in gly residues. Low complexity-rich tracts occupy residues 160–204 (SSSS…QSTP) and 215–235 (PSAT…GAAA). A lipid anchor (GPI-anchor amidated alanine) is attached at Ala233. Residues 234-256 (AAGLKGSAVLAGVVALGAWIGLL) constitute a propeptide, removed in mature form.

It localises to the cell membrane. Its subcellular location is the secreted. This is Extracellular serine-rich protein ARB_03024 from Arthroderma benhamiae (strain ATCC MYA-4681 / CBS 112371) (Trichophyton mentagrophytes).